The chain runs to 158 residues: 2-C-methyl-D-erythritol 2,4-cyclodiphosphate synthase (158 aa).

2 residues coordinate a divalent metal cation: aspartate 10 and histidine 12. Residues 10 to 12 (DVH) and 36 to 37 (HS) contribute to the 4-CDP-2-C-methyl-D-erythritol 2-phosphate site. A divalent metal cation is bound at residue histidine 44. Residues 58–60 (DIG), 63–67 (FSDTD), and arginine 144 each bind 4-CDP-2-C-methyl-D-erythritol 2-phosphate.

This sequence belongs to the IspF family. In terms of assembly, homotrimer. The cofactor is a divalent metal cation.

The enzyme catalyses 4-CDP-2-C-methyl-D-erythritol 2-phosphate = 2-C-methyl-D-erythritol 2,4-cyclic diphosphate + CMP. It participates in isoprenoid biosynthesis; isopentenyl diphosphate biosynthesis via DXP pathway; isopentenyl diphosphate from 1-deoxy-D-xylulose 5-phosphate: step 4/6. In terms of biological role, involved in the biosynthesis of isopentenyl diphosphate (IPP) and dimethylallyl diphosphate (DMAPP), two major building blocks of isoprenoid compounds. Catalyzes the conversion of 4-diphosphocytidyl-2-C-methyl-D-erythritol 2-phosphate (CDP-ME2P) to 2-C-methyl-D-erythritol 2,4-cyclodiphosphate (ME-CPP) with a corresponding release of cytidine 5-monophosphate (CMP). The sequence is that of 2-C-methyl-D-erythritol 2,4-cyclodiphosphate synthase from Burkholderia vietnamiensis (strain G4 / LMG 22486) (Burkholderia cepacia (strain R1808)).